Consider the following 397-residue polypeptide: RNA binding protein fox-1 homolog 1 (397 aa).

The interval 1–121 is disordered; it reads MNCEREQLRG…NKSQPKRLHV (121 aa). Polar residues predominate over residues 70 to 87; the sequence is QTHSEQSPADTSAQTVSG. Over residues 88–99 the composition is skewed to low complexity; it reads TATQTDDAAPTD. The segment covering 100-113 has biased composition (polar residues); it reads GQPQTQPSENTENK. One can recognise an RRM domain in the interval 117–193; it reads KRLHVSNIPF…RKIEVNNATA (77 aa). Arginine 317 is subject to Asymmetric dimethylarginine. Position 388 is an omega-N-methylarginine (arginine 388).

As to quaternary structure, binds to the C-terminus of ATXN2. As to expression, predominantly expressed in muscle and brain.

Its subcellular location is the nucleus. It localises to the cytoplasm. In terms of biological role, RNA-binding protein that regulates alternative splicing events by binding to 5'-UGCAUGU-3' elements. Regulates alternative splicing of tissue-specific exons and of differentially spliced exons during erythropoiesis. This is RNA binding protein fox-1 homolog 1 (RBFOX1) from Homo sapiens (Human).